The chain runs to 321 residues: MMSLAWPLFRVTEQAALAAWPQTGCGDKNKIDGLAVTAMRQALNDVAFRGRVVIGEGEIDHAPMLWIGEEVGKGDGPEVDIAVDPIEGTRMVAMGQSNALAVMAFAPRDSLLHAPDMYMKKLVVNRLAAGAIDLSLPLTDNLRNVAKALGKPLDKLRMVTLDKPRLSAAIEEATQLGVKVFALPDGDVAASVLTCWQDNPYDVMYTIGGAPEGVISACAVKALGGDMQAELIDFCQAKGDYTENRQIAEQERKRCKAMGVDVNRVYSLDELVRGNDILFSATGVTGGELVNGIQQTANGVRTQTLLIGGADQTCNIIDSLH.

Mn(2+) is bound by residues Asp-32, Glu-56, Asp-84, and Glu-87. Residues 87–89 (EGT), Tyr-118, 163–165 (KPR), 185–187 (DGD), and Gly-209 contribute to the substrate site. Glu-212 contributes to the Mn(2+) binding site.

This sequence belongs to the FBPase class 2 family. As to quaternary structure, homodimer. Mn(2+) is required as a cofactor.

It catalyses the reaction beta-D-fructose 1,6-bisphosphate + H2O = beta-D-fructose 6-phosphate + phosphate. Competitively inhibited by low concentrations of phosphate (IC50 of 1.2 mM) and is also sensitive to Li(+) (IC50 of 15.8 mM). Also inhibited by 1 mM ATP or 50 mM KCl (60% and 20% residual activity, respectively). Slightly activated (40-50%) by the addition of 1 mM dithiothreitol in vitro. Its function is as follows. Catalyzes the hydrolysis of fructose 1,6-bisphosphate to fructose 6-phosphate. Also displays a low activity toward glucose 1,6-bisphosphate, and no activity against ribulose 1,5-bisphosphate, fructose 2,6-bisphosphate, or fructose 1-phosphate. This Escherichia coli (strain K12) protein is Fructose-1,6-bisphosphatase 2 class 2 (yggF).